The sequence spans 751 residues: Phosphoribosylformylglycinamidine synthase subunit PurL (751 aa).

His-54 is an active-site residue. Residues Tyr-57 and Lys-106 each contribute to the ATP site. Glu-108 provides a ligand contact to Mg(2+). Substrate contacts are provided by residues 109 to 112 (SHNH) and Arg-131. Residue His-110 is the Proton acceptor of the active site. Mg(2+) is bound at residue Asp-132. Gln-256 is a substrate binding site. Asp-284 lines the Mg(2+) pocket. A substrate-binding site is contributed by 328 to 330 (ESQ). The ATP site is built by Asp-516 and Gly-553. Asn-554 contacts Mg(2+). Ser-556 provides a ligand contact to substrate.

It belongs to the FGAMS family. In terms of assembly, monomer. Part of the FGAM synthase complex composed of 1 PurL, 1 PurQ and 2 PurS subunits.

The protein resides in the cytoplasm. It carries out the reaction N(2)-formyl-N(1)-(5-phospho-beta-D-ribosyl)glycinamide + L-glutamine + ATP + H2O = 2-formamido-N(1)-(5-O-phospho-beta-D-ribosyl)acetamidine + L-glutamate + ADP + phosphate + H(+). It functions in the pathway purine metabolism; IMP biosynthesis via de novo pathway; 5-amino-1-(5-phospho-D-ribosyl)imidazole from N(2)-formyl-N(1)-(5-phospho-D-ribosyl)glycinamide: step 1/2. Part of the phosphoribosylformylglycinamidine synthase complex involved in the purines biosynthetic pathway. Catalyzes the ATP-dependent conversion of formylglycinamide ribonucleotide (FGAR) and glutamine to yield formylglycinamidine ribonucleotide (FGAM) and glutamate. The FGAM synthase complex is composed of three subunits. PurQ produces an ammonia molecule by converting glutamine to glutamate. PurL transfers the ammonia molecule to FGAR to form FGAM in an ATP-dependent manner. PurS interacts with PurQ and PurL and is thought to assist in the transfer of the ammonia molecule from PurQ to PurL. The chain is Phosphoribosylformylglycinamidine synthase subunit PurL from Nocardioides sp. (strain ATCC BAA-499 / JS614).